Reading from the N-terminus, the 116-residue chain is NADH-ubiquinone oxidoreductase chain 3 (116 aa).

3 consecutive transmembrane segments (helical) span residues 3–23 (LITT…TISF), 56–76 (FFLI…LLPL), and 87–107 (LTLI…IYEW).

This sequence belongs to the complex I subunit 3 family.

It is found in the mitochondrion membrane. It catalyses the reaction a ubiquinone + NADH + 5 H(+)(in) = a ubiquinol + NAD(+) + 4 H(+)(out). In terms of biological role, core subunit of the mitochondrial membrane respiratory chain NADH dehydrogenase (Complex I) that is believed to belong to the minimal assembly required for catalysis. Complex I functions in the transfer of electrons from NADH to the respiratory chain. The immediate electron acceptor for the enzyme is believed to be ubiquinone. The polypeptide is NADH-ubiquinone oxidoreductase chain 3 (MT-ND3) (Oncorhynchus tshawytscha (Chinook salmon)).